The chain runs to 441 residues: Homogentisate 1,2-dioxygenase (441 aa).

The active-site Proton acceptor is His-287. Positions 330 and 336 each coordinate Fe cation. Tyr-345 and His-366 together coordinate homogentisate. His-366 lines the Fe cation pocket.

Belongs to the homogentisate dioxygenase family. In terms of assembly, hexamer; dimer of trimers. Requires Fe cation as cofactor.

It catalyses the reaction homogentisate + O2 = 4-maleylacetoacetate + H(+). It participates in amino-acid degradation; L-phenylalanine degradation; acetoacetate and fumarate from L-phenylalanine: step 4/6. In terms of biological role, involved in the catabolism of homogentisate (2,5-dihydroxyphenylacetate or 2,5-OH-PhAc), a central intermediate in the degradation of phenylalanine and tyrosine. Catalyzes the oxidative ring cleavage of the aromatic ring of homogentisate to yield maleylacetoacetate. This Xanthomonas oryzae pv. oryzae (strain KACC10331 / KXO85) protein is Homogentisate 1,2-dioxygenase.